Here is a 315-residue protein sequence, read N- to C-terminus: Calcium homeostasis modulator protein 6 (315 aa).

Residues 1-21 (MEKFKAVLDLQIKHRSALGYG) lie on the Cytoplasmic side of the membrane. A helical membrane pass occupies residues 22–37 (LVTLLTAGGEKIFSTV). Residues 38–46 (VFQCPCTAT) lie on the Extracellular side of the membrane. Cystine bridges form between C41–C127, C43–C156, and C140–C147. The helical transmembrane segment at 47–68 (LNLTYGLVFLLVPALALFLLGY) threads the bilayer. Over 69–103 (ALSARTWRLLTGCCSRSASTRSSSGLRSTLVCAQV) the chain is Cytoplasmic. The chain crosses the membrane as a helical span at residues 104–128 (SAVAALAPLTWVAVALLGGSFYQCA). At 129-169 (VSGSTRLASYLCKDRNHSCIAKLPQVPCNKQEAEMQEILSQ) the chain is on the extracellular side. The helical transmembrane segment at 170–192 (LKAQSQVLGWVLIAAVIFLLLVF) threads the bilayer. The Cytoplasmic segment spans residues 193-315 (KCVSRCFSPV…DAAMANTHGV (123 aa)).

The protein belongs to the CALHM family. As to quaternary structure, oligomerizes to form decameric and undecameric channels.

The protein localises to the cell membrane. It carries out the reaction ATP(in) = ATP(out). Pore-forming subunit of an ATP-permeable channel. In response to pathogen-derived and proinflammatory stimuli, relocates from intracellular compartments to NK-dendritic cell and NK-macrophage immune synapses where it mediates ATP efflux and NK cell activation involved in antimicrobial and antitumor responses. May assemble to form gap junction channel-like structures with gating and ion conductance likely regulated by membrane lipids and voltage rather than by extracellular calcium levels. The protein is Calcium homeostasis modulator protein 6 of Rattus norvegicus (Rat).